We begin with the raw amino-acid sequence, 177 residues long: Large ribosomal subunit protein uL6 (177 aa).

The disordered stretch occupies residues 151-177; that stretch reads LRPPEPYKGKGVRYAGENVRRKEGKKK.

The protein belongs to the universal ribosomal protein uL6 family. In terms of assembly, part of the 50S ribosomal subunit.

This protein binds to the 23S rRNA, and is important in its secondary structure. It is located near the subunit interface in the base of the L7/L12 stalk, and near the tRNA binding site of the peptidyltransferase center. The protein is Large ribosomal subunit protein uL6 of Phenylobacterium zucineum (strain HLK1).